The following is a 163-amino-acid chain: Nucleotide-binding protein MS1759 (163 aa).

This sequence belongs to the YajQ family.

Nucleotide-binding protein. The chain is Nucleotide-binding protein MS1759 from Mannheimia succiniciproducens (strain KCTC 0769BP / MBEL55E).